Here is a 1158-residue protein sequence, read N- to C-terminus: Formin-C (1158 aa).

Disordered stretches follow at residues 8–29 (INGN…PSVS), 417–523 (PNTS…LSCL), and 990–1052 (INNN…NNSQ). One can recognise a GBD/FH3 domain in the interval 20–388 (QQPQQNPSVS…EYSQRKLEMI (369 aa)). The segment covering 417-437 (PNTSDLFDSSTLEDTYDGNND) has biased composition (polar residues). Low complexity predominate over residues 438–481 (TNSCTSISTSSTPIHISQPTTLIVPSTTPNHPPQQSQQTPPLQL). The stretch at 479-515 (LQLQKEKEKEKEKEKEKEKEKEKEQQQQQQQSNKQST) forms a coiled coil. Over residues 482 to 503 (QKEKEKEKEKEKEKEKEKEKEQ) the composition is skewed to basic and acidic residues. An FH2 domain is found at 601–998 (TKSPITPSKR…IINNNNNNNN (398 aa)). One can recognise a DAD domain in the interval 1134-1158 (SDDPMAVIIEALKTGSPNDMVKRAF).

The protein belongs to the formin homology family. Diaphanous subfamily. In terms of assembly, interacts (via GBD/FH3 domain) with activated Rho-GTPases.

It is found in the cytoplasm. The protein resides in the cytosol. The protein localises to the cytoskeleton. Functionally, formins play an important role in the nucleation of actin and the formation of linear actin filaments. The protein is Formin-C (forC) of Dictyostelium discoideum (Social amoeba).